The primary structure comprises 285 residues: Gas vesicle protein C2 (285 aa).

Repeat copies occupy residues 22 to 52 (EAMDAYAEEFAADVNSIRTDSRHRENIRDMR), 53 to 84 (AAVDAYCESFATAVSTHHDETAALRADLEATA), 85 to 122 (AAFDAYTTAFAADAAAMHDVSALHRDIEALREEFRAVT), 123 to 155 (TDFEDYTTDEFAPAVGALHADAAETAASFTAKQ), 156 to 188 (EGFEAYRHDVHESAVPALTADIAATRADFDDTA), and 189 to 220 (ASFAAYARAFYGHTDDATAQTDADDTTAQTDV). The 6 X approximate tandem repeats stretch occupies residues 22–220 (EAMDAYAEEF…ADDTTAQTDV (199 aa)).

This sequence belongs to the halobacterial gas vesicle GvpC family.

The protein localises to the gas vesicle. In terms of biological role, confers stability, involved in shaping gas vesicles (GV), hollow, gas filled proteinaceous nanostructures. GVs allow positioning of halobacteria at an optimal depth for growth in the poorly aerated, shallow brine pools of their habitat. Expression of 2 c-vac DNA fragments containing 2 divergently transcribed regions (gvpE-gvpF-gvpG-gvpH-gvpI-gvpJ-gvpK-gvpL-gvpM and gvpA-gvpC-gvpN-gvpO) allows H.volcanii to produce gas vesicles. The polypeptide is Gas vesicle protein C2 (Halobacterium salinarum (strain ATCC 700922 / JCM 11081 / NRC-1) (Halobacterium halobium)).